Reading from the N-terminus, the 360-residue chain is Phospho-N-acetylmuramoyl-pentapeptide-transferase (360 aa).

10 helical membrane-spanning segments follow: residues 21–41, 73–93, 94–114, 145–165, 168–188, 199–219, 236–256, 263–283, 288–308, and 339–359; these read YLTL…LWLG, TMGG…WGDL, TNHY…IGWV, AVTL…VPLF, VVVP…VGSS, GLAI…AYAS, AGEL…FLWF, VFMG…VAVI, IVLF…MLQV, and IVRF…TLKI.

The protein belongs to the glycosyltransferase 4 family. MraY subfamily. Mg(2+) serves as cofactor.

The protein localises to the cell inner membrane. It catalyses the reaction UDP-N-acetyl-alpha-D-muramoyl-L-alanyl-gamma-D-glutamyl-meso-2,6-diaminopimeloyl-D-alanyl-D-alanine + di-trans,octa-cis-undecaprenyl phosphate = di-trans,octa-cis-undecaprenyl diphospho-N-acetyl-alpha-D-muramoyl-L-alanyl-D-glutamyl-meso-2,6-diaminopimeloyl-D-alanyl-D-alanine + UMP. Its pathway is cell wall biogenesis; peptidoglycan biosynthesis. In terms of biological role, catalyzes the initial step of the lipid cycle reactions in the biosynthesis of the cell wall peptidoglycan: transfers peptidoglycan precursor phospho-MurNAc-pentapeptide from UDP-MurNAc-pentapeptide onto the lipid carrier undecaprenyl phosphate, yielding undecaprenyl-pyrophosphoryl-MurNAc-pentapeptide, known as lipid I. The protein is Phospho-N-acetylmuramoyl-pentapeptide-transferase of Chromohalobacter salexigens (strain ATCC BAA-138 / DSM 3043 / CIP 106854 / NCIMB 13768 / 1H11).